Consider the following 222-residue polypeptide: Thiopurine S-methyltransferase (222 aa).

W10, L45, E66, and R126 together coordinate S-adenosyl-L-methionine.

The protein belongs to the class I-like SAM-binding methyltransferase superfamily. TPMT family.

Its subcellular location is the cytoplasm. It carries out the reaction S-adenosyl-L-methionine + a thiopurine = S-adenosyl-L-homocysteine + a thiopurine S-methylether.. This chain is Thiopurine S-methyltransferase, found in Shewanella piezotolerans (strain WP3 / JCM 13877).